The following is a 457-amino-acid chain: Argininosuccinate lyase (457 aa).

This sequence belongs to the lyase 1 family. Argininosuccinate lyase subfamily.

The protein resides in the cytoplasm. It carries out the reaction 2-(N(omega)-L-arginino)succinate = fumarate + L-arginine. Its pathway is amino-acid biosynthesis; L-arginine biosynthesis; L-arginine from L-ornithine and carbamoyl phosphate: step 3/3. This Haemophilus influenzae (strain PittGG) protein is Argininosuccinate lyase.